A 358-amino-acid polypeptide reads, in one-letter code: Aminomethyltransferase (358 aa).

Belongs to the GcvT family. In terms of assembly, the glycine cleavage system is composed of four proteins: P, T, L and H.

The enzyme catalyses N(6)-[(R)-S(8)-aminomethyldihydrolipoyl]-L-lysyl-[protein] + (6S)-5,6,7,8-tetrahydrofolate = N(6)-[(R)-dihydrolipoyl]-L-lysyl-[protein] + (6R)-5,10-methylene-5,6,7,8-tetrahydrofolate + NH4(+). Functionally, the glycine cleavage system catalyzes the degradation of glycine. The protein is Aminomethyltransferase of Francisella philomiragia subsp. philomiragia (strain ATCC 25017 / CCUG 19701 / FSC 153 / O#319-036).